A 92-amino-acid polypeptide reads, in one-letter code: Small ribosomal subunit protein uS19 (92 aa).

This sequence belongs to the universal ribosomal protein uS19 family.

Functionally, protein S19 forms a complex with S13 that binds strongly to the 16S ribosomal RNA. The sequence is that of Small ribosomal subunit protein uS19 from Oceanobacillus iheyensis (strain DSM 14371 / CIP 107618 / JCM 11309 / KCTC 3954 / HTE831).